The primary structure comprises 6631 residues: Replicase polyprotein 1ab (6631 aa).

Over 1–1752 (MASSLKQGVS…VSSYKIVLCK (1752 aa)) the chain is Cytoplasmic. Ubiquitin-like domains follow at residues 675–780 (KTVT…RDYE) and 1177–1229 (CKQK…ILFI). A Macro domain is found at 1005 to 1181 (VKPATCEKPK…YFDATCKQKT (177 aa)). Residues 1238–1499 (EYYGLDAQKY…AKVVKEDVSN (262 aa)) enclose the Peptidase C16 domain. The For PL-PRO activity role is filled by C1276. The segment at 1355–1392 (CNCGVKSYELRGLEACIQPVRAPNLLHFKTQYSNCPTC) adopts a C4-type; degenerate zinc-finger fold. Catalysis depends on for PL-PRO activity residues H1439 and D1450. A helical membrane pass occupies residues 1753 to 1773 (VVFATLLIVWFIYTSNPVVFT). The tract at residues 1753-1866 (VVFATLLIVW…KPVAGFVIIC (114 aa)) is HD1. The 3Ecto domain occupies 1771 to 1835 (VFTGIRVLDF…AYSVEQIYKD (65 aa)). The Lumenal portion of the chain corresponds to 1774 to 1845 (GIRVLDFLFE…AASGINFNWN (72 aa)). Disulfide bonds link C1787-C1813 and C1804-C1810. A helical membrane pass occupies residues 1846 to 1866 (WLYLVFLILFVKPVAGFVIIC). Residues 1867 to 2282 (YCVKYLVLSS…TFKWFMSCFK (416 aa)) are Cytoplasmic-facing. The segment at 1913–2003 (YVQVHHILYC…KLKRHVKPTA (91 aa)) is Y1. The CoV Nsp3 Y domain occupies 1913-2265 (YVQVHHILYC…HTQKLLVEKK (353 aa)). The Zn(2+) site is built by H1917, C1922, C1927, C1930, C1963, H1966, C1970, and C1973. The interval 1917–1930 (HHILYCKDVTCEVC) is ZF1. A ZF2 region spans residues 1963 to 1973 (CKRHNWYCRNC). Residues 2004-2106 (YAYHVVYEAC…ILDQALYEQL (103 aa)) form a Y2 region. The tract at residues 2004–2265 (YAYHVVYEAC…HTQKLLVEKK (262 aa)) is coV-Y. Positions 2107–2165 (IVEPVSKSVIDKVCSILSNIISVDTAALNYKAGTLRDALLSITKDEEAVDMAIFCHNHE) are Y3. Residues 2166-2265 (VEYTGDGFTN…HTQKLLVEKK (100 aa)) form a Y4 region. The helical transmembrane segment at 2283–2303 (WLFVFYILFTACCLGYYYMEM) threads the bilayer. The HD2 stretch occupies residues 2283-2666 (WLFVFYILFT…LACCYLGFIL (384 aa)). Residues 2304 to 2561 (NKSFVHPMYD…FFTGVNPNIY (258 aa)) lie on the Lumenal side of the membrane. The chain crosses the membrane as a helical span at residues 2562–2582 (IQLATMFLILVVIVLIFAMVI). Residues 2583-2613 (KFQGVFKAYATIVFTIMLVWVINAFVLCVHS) lie on the Cytoplasmic side of the membrane. The chain crosses the membrane as a helical span at residues 2614-2634 (YNSVLAVILLVLYCYASMVTS). The Lumenal segment spans residues 2635-2645 (RNTAIIMHCWL). Residues 2646-2666 (VFTFGLIVPTWLACCYLGFIL) traverse the membrane as a helical segment. Topologically, residues 2667–3098 (YMYTPLVFWC…SSFVRKATSW (432 aa)) are cytoplasmic. Residues 2686-2781 (LYDGNEFVGN…RYSIGVSRLQ (96 aa)) enclose the Nsp4C domain. The region spanning 2782 to 3088 (AGFKKLVSPS…FNQVGGVRLQ (307 aa)) is the Peptidase C30 domain. Catalysis depends on for 3CL-PRO activity residues H2822 and C2924. Residues 3099–3119 (FWSRCVLACFLFVLCAIVLFT) traverse the membrane as a helical segment. The segment at 3099–3319 (FWSRCVLACF…WLCTCYFGLY (221 aa)) is HD3. Over 3120–3123 (AVPL) the chain is Lumenal. The chain crosses the membrane as a helical span at residues 3124 to 3144 (KFYVHAAVILLMAVLFISFTV). The Cytoplasmic portion of the chain corresponds to 3145-3153 (KHVMAYMDT). Residues 3154–3174 (FLLPTLITVIIGVCAEVPFIY) form a helical membrane-spanning segment. The Lumenal segment spans residues 3175–3190 (NTLISQVVIFLSQWYD). Residues 3191–3211 (PVVFDTMVPWMLLPLVLYTAF) form a helical membrane-spanning segment. The Cytoplasmic portion of the chain corresponds to 3212–3259 (KCVQGCYMNSFNTSLLMLYQFMKLGFVIYTSSNTLTAYTEGNWELFFE). A helical membrane pass occupies residues 3260–3280 (LVHTIVLANVSSNSLIGLIVF). Residues 3281-3298 (KCAKWMLYYCNATYFNNY) lie on the Lumenal side of the membrane. The helical transmembrane segment at 3299-3319 (VLMAVMVNGIGWLCTCYFGLY) threads the bilayer. Residues 3320 to 6631 (WWVNKVFGLT…FTSDSFVCTM (3312 aa)) lie on the Cytoplasmic side of the membrane. Residues 3382–3464 (SKLSDVKCTT…DILKRSTVLQ (83 aa)) form the RdRp Nsp7 cofactor domain. The RdRp Nsp8 cofactor domain occupies 3465–3674 (SVTQEFSHIP…GHNKVDVALQ (210 aa)). The Nsp9 ssRNA-binding domain occupies 3675–3785 (NNELMPHGVK…GAISNVVVLQ (111 aa)). An ExoN/MTase coactivator domain is found at 3787–3928 (KGHETEEVDA…CDSLRQPKPS (142 aa)). Residues C3860, C3863, H3869, C3880, C3906, C3909, C3917, and C3919 each contribute to the Zn(2+) site. Zinc fingers lie at residues 3860–3880 (CLYCRAHIAHPGGAGNLDGRC) and 3906–3919 (CTVCQCWIGYGCQC). The region spanning 3942–4200 (YLNRVRGSSE…APERYFEYDV (259 aa)) is the NiRAN domain. Residues 4205 to 4303 (KSYDLLKYDY…MNQDNTMSFS (99 aa)) form the Nsp12 Interface domain. Residues H4234, C4240, C4245, C4249, and C4426 each contribute to the Zn(2+) site. The Nsp12 RNA-dependent RNA polymerase domain maps to 4304 to 4870 (KMGLSQLMQF…NMYRAPTTLQ (567 aa)). The tract at residues 4306 to 4519 (GLSQLMQFVG…HQKILKSIVN (214 aa)) is rdRp Fingers N-ter. The interval 4520–4558 (TRNAPVVIGTTKFYGGWDNMLRNLIQGVEDPILMGWDYP) is rdRp Palm N-ter. In terms of domain architecture, RdRp catalytic spans 4550-4712 (PILMGWDYPK…CYNNTLAKQG (163 aa)). A rdRp Fingers C-ter region spans residues 4559-4617 (KCDRAMPNLLRIAASLVLARKHTNCCTWSERVYRLYNECAQVLSETVLATGGIYVKPGG). Positions 4580, 4583, and 4584 each coordinate Zn(2+). A rdRp Palm C-ter region spans residues 4618–4753 (TSSGDATTAY…EKGPHEFCSQ (136 aa)). Active-site residues include S4697, D4698, and D4699. The rdRp Thumb stretch occupies residues 4754–4870 (HTMLVEVDGE…NMYRAPTTLQ (117 aa)). Positions 4871 to 4983 (SCGVCVVCNS…DDFNQLATTN (113 aa)) constitute a CV ZBD domain. Zn(2+) contacts are provided by C4875, C4878, C4886, C4889, C4896, C4899, H4903, H4909, C4920, C4925, C4942, and H4945. One can recognise a (+)RNA virus helicase ATP-binding domain in the interval 5127-5307 (MVPACFVNNI…MVCVKPDIFL (181 aa)). Residue 5152–5159 (GPPGSGKS) coordinates ATP. In terms of domain architecture, (+)RNA virus helicase C-terminal spans 5308–5479 (AKCYRCPKEI…QGTGLFKICN (172 aa)). An ExoN domain is found at 5541–5755 (MFITRDEAIR…RCLAINNAFC (215 aa)). Catalysis depends on residues D5559, E5561, and E5660. The Zn(2+) site is built by C5676, C5678, C5694, H5697, H5725, C5729, and H5732. Residues H5736 and D5741 contribute to the active site. C5747 provides a ligand contact to Zn(2+). The N7-MTase domain occupies 5764–5991 (YPHIANEDEV…NLWKSFSALQ (228 aa)). 5799 to 5805 (DIGNPKG) is a binding site for S-adenosyl-L-methionine. Residues 5879–5893 (CNGGSLYVNKHAFHT) form a gpppA-binding region. Zn(2+) is bound by residues C5917, C5937, C5948, and H5951. Residues 5992-6052 (SIDNIAYNMY…SVAFELYAKR (61 aa)) enclose the Nsp15 N-terminal oligomerization domain. Positions 6053–6168 (NIRTLPNNRI…VYKRVNGAFV (116 aa)) constitute an AV-Nsp11N/CoV-Nsp15M domain. In terms of domain architecture, NendoU spans 6185–6326 (EPRSDVERDF…EDGIIKTCYP (142 aa)). Catalysis depends on residues H6214, H6229, K6269, K6373, D6457, K6501, and E6534. The 300-residue stretch at 6329–6628 (QSAWTCGYNM…NTSFTSDSFV (300 aa)) folds into the Nidovirus-type SAM-dependent 2'-O-MTase domain.

It belongs to the coronaviruses polyprotein 1ab family. Interacts with host PHB and PHB2. As to quaternary structure, interacts with papain-like protease and non-structural protein 6. In terms of assembly, monomer. Homodimer. Only the homodimer shows catalytic activity. Eight copies of nsp7 and eight copies of nsp8 assemble to form a heterohexadecamer dsRNA-encircling ring structure. As to quaternary structure, eight copies of nsp7 and eight copies of nsp8 assemble to form a heterohexadecamer dsRNA-encircling ring structure. Interacts with ORF6 protein. In terms of assembly, homodimer. Homododecamer. Interacts with proofreading exoribonuclease nsp14 and 2'-O-methyltransferase nsp16; these interactions enhance nsp14 and nsp16 enzymatic activities. As to quaternary structure, interacts with host DDX1 (via C-terminus). Interacts with non-structural protein 10. In terms of assembly, homohexamer. Interacts with non-structural protein 10. It depends on Mn(2+) as a cofactor. The cofactor is Zn(2+). Specific enzymatic cleavages in vivo by its own proteases yield mature proteins. 3C-like proteinase nsp5 liberates nsps 6-16 from the polyprotein. Papain-like and 3C-like proteinases are autocatalytically processed. In terms of processing, N-glycosylated.

The protein resides in the host endoplasmic reticulum membrane. The protein localises to the host cytoplasm. It localises to the host perinuclear region. It is found in the host endoplasmic reticulum. Its subcellular location is the host endoplasmic reticulum-Golgi intermediate compartment. It catalyses the reaction Thiol-dependent hydrolysis of ester, thioester, amide, peptide and isopeptide bonds formed by the C-terminal Gly of ubiquitin (a 76-residue protein attached to proteins as an intracellular targeting signal).. The catalysed reaction is RNA(n) + a ribonucleoside 5'-triphosphate = RNA(n+1) + diphosphate. It carries out the reaction ATP + H2O = ADP + phosphate + H(+). The enzyme catalyses a 5'-end diphospho-ribonucleoside in mRNA + GTP + H(+) = a 5'-end (5'-triphosphoguanosine)-ribonucleoside in mRNA + diphosphate. It catalyses the reaction uridylyl-uridylyl-ribonucleotide-RNA = a 3'-end uridylyl-2',3'-cyclophospho-uridine-RNA + a 5'-end dephospho-ribonucleoside-RNA. The catalysed reaction is a 5'-end (N(7)-methyl 5'-triphosphoguanosine)-ribonucleoside in mRNA + S-adenosyl-L-methionine = a 5'-end (N(7)-methyl 5'-triphosphoguanosine)-(2'-O-methyl-ribonucleoside) in mRNA + S-adenosyl-L-homocysteine + H(+). In terms of biological role, multifunctional protein involved in the transcription and replication of viral RNAs. Contains the proteinases responsible for the cleavages of the polyprotein. Functionally, may play a role in the modulation of host cell survival signaling pathway by interacting with host PHB and PHB2. Indeed, these two proteins play a role in maintaining the functional integrity of the mitochondria and protecting cells from various stresses. Its function is as follows. Responsible for the cleavages located at the N-terminus of the replicase polyprotein. In addition, PL-PRO possesses a deubiquitinating/deISGylating activity and processes both 'Lys-48'- and 'Lys-63'-linked polyubiquitin chains from cellular substrates. Plays a role in host membrane rearrangement that leads to creation of cytoplasmic double-membrane vesicles (DMV) necessary for viral replication. Alone is able to induce paired membranes. Coexpression of nsp3 and nsp4 does not result in the formation of DMVs. In terms of biological role, responsible for the majority of cleavages as it cleaves the C-terminus of replicase polyprotein at 11 sites. Recognizes substrates containing the core sequence [ILMVF]-Q-|-[SGACN]. Inhibited by the substrate-analog Cbz-Val-Asn-Ser-Thr-Leu-Gln-CMK. Functionally, forms a hexadecamer with nsp8 (8 subunits of each) that may participate in viral replication by acting as a primase. Alternatively, may synthesize substantially longer products than oligonucleotide primers. Its function is as follows. Forms a hexadecamer with nsp7 (8 subunits of each) that may participate in viral replication by acting as a primase. Alternatively, may synthesize substantially longer products than oligonucleotide primers. Forms a primer, NSP9-pU, which is utilized by the polymerase for the initiation of RNA chains. Interacts with ribosome signal recognition particle RNA (SRP). Together with NSP8, suppress protein integration into the cell membrane, thereby disrupting host immune defenses. In terms of biological role, plays a pivotal role in viral transcription by stimulating both nsp14 3'-5' exoribonuclease and nsp16 2'-O-methyltransferase activities. Therefore plays an essential role in viral mRNAs cap methylation. Functionally, RNA-directed RNA polymerase that catalyzes the transcription of viral genomic and subgenomic RNAs. Acts in complex with nsp7 and nsp8 to transcribe both the minus and positive strands of genomic RNA. The kinase-like NiRAN domain of NSP12 attaches one or more nucleotides to the amino terminus of NSP9, forming a covalent RNA-protein intermediate that serves as transcription/replication primer. Subgenomic RNAs (sgRNAs) are formed by discontinuous transcription: The polymerase has the ability to pause at transcription-regulating sequences (TRS) and jump to the leader TRS, resulting in a major deletion. This creates a series of subgenomic RNAs that are replicated, transcribed and translated. In addition, Nsp12 is a subunit of the viral RNA capping enzyme that catalyzes the RNA guanylyltransferase reaction for genomic and sub-genomic RNAs. Subsequently, the NiRAN domain transfers RNA to GDP, and forms the core cap structure GpppA-RNA. Its function is as follows. Multi-functional protein with a zinc-binding domain in N-terminus displaying RNA and DNA duplex-unwinding activities with 5' to 3' polarity. Activity of helicase is dependent on magnesium. Enzyme possessing two different activities: an exoribonuclease activity acting on both ssRNA and dsRNA in a 3' to 5' direction and a N7-guanine methyltransferase activity. Acts as a proofreading exoribonuclease for RNA replication, thereby lowering The sensitivity of the virus to RNA mutagens. In terms of biological role, plays a role in viral transcription/replication and prevents the simultaneous activation of host cell dsRNA sensors, such as MDA5/IFIH1, OAS, and PKR. Acts by degrading the 5'-polyuridines generated during replication of the poly(A) region of viral genomic and subgenomic RNAs. Catalyzes a two-step reaction in which a 2'3'-cyclic phosphate (2'3'-cP) is first generated by 2'-O transesterification, which is then hydrolyzed to a 3'-phosphate (3'-P). If not degraded, poly(U) RNA would hybridize with poly(A) RNA tails and activate host dsRNA sensors. Functionally, methyltransferase that mediates mRNA cap 2'-O-ribose methylation to the 5'-cap structure of viral mRNAs. N7-methyl guanosine cap is a prerequisite for binding of nsp16. Therefore plays an essential role in viral mRNAs cap methylation which is essential to evade immune system. The polypeptide is Replicase polyprotein 1ab (rep) (Gallus gallus (Chicken)).